Here is a 326-residue protein sequence, read N- to C-terminus: Cytosolic sulfotransferase 7 (326 aa).

3'-phosphoadenylyl sulfate is bound at residue 72–77 (KSGTTW). The active-site Proton acceptor is H138. 3'-phosphoadenylyl sulfate contacts are provided by residues R160, S168, Y226, and 292-294 (RKG).

The protein belongs to the sulfotransferase 1 family.

It localises to the cytoplasm. Its function is as follows. Sulfotransferase that utilizes 3'-phospho-5'-adenylyl sulfate (PAPS) as sulfonate donor. This chain is Cytosolic sulfotransferase 7 (SOT7), found in Arabidopsis thaliana (Mouse-ear cress).